A 91-amino-acid polypeptide reads, in one-letter code: Small ribosomal subunit protein uS19 (91 aa).

It belongs to the universal ribosomal protein uS19 family.

Its function is as follows. Protein S19 forms a complex with S13 that binds strongly to the 16S ribosomal RNA. The chain is Small ribosomal subunit protein uS19 from Lachnospira eligens (strain ATCC 27750 / DSM 3376 / VPI C15-48 / C15-B4) (Eubacterium eligens).